A 543-amino-acid chain; its full sequence is Ipecoside beta-D-glucosidase IpeGLU1 (543 aa).

A beta-D-glucoside is bound by residues glutamine 36, histidine 140, 185–186, tyrosine 350, glutamate 422, tryptophan 471, and phenylalanine 487; that span reads NE. Glutamate 186 functions as the Proton donor in the catalytic mechanism. Glutamate 422 (nucleophile) is an active-site residue.

The protein belongs to the glycosyl hydrolase 1 family. In terms of tissue distribution, expressed in roots.

It is found in the cytoplasm. The protein localises to the cytosol. It catalyses the reaction deacetylipecoside + H2O = deacetylipecoside aglycone + D-glucose. It carries out the reaction deacetylisoipecoside + H2O = deacetylisoipecoside aglycone + D-glucose. The enzyme catalyses 6-O-methyldeacetylipecoside + H2O = 6-O-methyldeacetylipecoside aglycone + D-glucose. The catalysed reaction is 6-O-methyldeacetylisoipecoside + H2O = 6-O-methyldeacetylisoipecoside aglycone + D-glucose. It catalyses the reaction ipecoside + H2O = ipecoside aglycone + D-glucose. It carries out the reaction 3alpha(S)-strictosidine + H2O = strictosidine aglycone + D-glucose. It functions in the pathway alkaloid biosynthesis. Inhibited by Cu(2+), Fe(2+) and Zn(2+). In terms of biological role, beta-glucosidase involved in the biosynthesis of ipecac and benzylisoquinoline monoterpenoid-isoquinoline alkaloids natural products, starting by the condensation of dopamine and secologanin, and including emetine and cephaeline, drugs used both as anti-protozoal (e.g. treatment of ameobiasis) and as emetic agents. In response to pathogen and herbivore attack, triggers the release of toxic ipecoside aglycon to trigger defense responses. Catalyzes deglucosylation both on (1S)-diastereomer and (1R)-diastereomer substrates, including ipecoside, the main alkaloidal glucoside. Also active on N-deacetylisoipecoside, 6-O-methyl-N-deacetylisoipecoside, 6-O-methyl-N-deacetylipecoside and N-deacetylipecoside. This Carapichea ipecacuanha (Ipecac) protein is Ipecoside beta-D-glucosidase IpeGLU1.